The primary structure comprises 390 residues: MKRVFLIVLDSVGIGEMPDAANYKDEGSNTLKAAAKSEFFSTPNLEKLGLFHMDGLTDMANSKVVPQATYARMNEASKGKDTTIGHWEISGIISEKPLPTFPEGFPKELLDEFEKRTGRKVICNKPYSGTEVIKDYGKEHVETGALIVYTSADSVFQIAAHEGVVPIEELYRYCEIAREICKGPTGVGRVIARPFEGEYPDYRRTAKRHDYSLQPPRDTMLNQLKEAGYSVLAVGKINDIFAGSGVTEMVYTKNNAEGIEETLKYQKKEFEGLCFVNLVDFDMVYGHRNDVDGYAKALSYFDEQLPRFLESMQEEDILMITADHGCDPSTPSTDHSREYTPLIVYGNQIKGNTNLGTRKTFADIGSAILEYFNVPSRIQGESFLEECMKK.

Mn(2+) is bound by residues D10, D282, H287, D323, H324, and H335.

It belongs to the phosphopentomutase family. Mn(2+) serves as cofactor.

Its subcellular location is the cytoplasm. It carries out the reaction 2-deoxy-alpha-D-ribose 1-phosphate = 2-deoxy-D-ribose 5-phosphate. It catalyses the reaction alpha-D-ribose 1-phosphate = D-ribose 5-phosphate. Its pathway is carbohydrate degradation; 2-deoxy-D-ribose 1-phosphate degradation; D-glyceraldehyde 3-phosphate and acetaldehyde from 2-deoxy-alpha-D-ribose 1-phosphate: step 1/2. In terms of biological role, isomerase that catalyzes the conversion of deoxy-ribose 1-phosphate (dRib-1-P) and ribose 1-phosphate (Rib-1-P) to deoxy-ribose 5-phosphate (dRib-5-P) and ribose 5-phosphate (Rib-5-P), respectively. The chain is Phosphopentomutase from Lachnoclostridium phytofermentans (strain ATCC 700394 / DSM 18823 / ISDg) (Clostridium phytofermentans).